Here is a 105-residue protein sequence, read N- to C-terminus: Large ribosomal subunit protein uL24 (105 aa).

It belongs to the universal ribosomal protein uL24 family. As to quaternary structure, part of the 50S ribosomal subunit.

One of two assembly initiator proteins, it binds directly to the 5'-end of the 23S rRNA, where it nucleates assembly of the 50S subunit. In terms of biological role, one of the proteins that surrounds the polypeptide exit tunnel on the outside of the subunit. In Thermotoga maritima (strain ATCC 43589 / DSM 3109 / JCM 10099 / NBRC 100826 / MSB8), this protein is Large ribosomal subunit protein uL24.